Here is a 401-residue protein sequence, read N- to C-terminus: Phosphoglycerate kinase (401 aa).

Substrate is bound by residues 21–23 (DFN), arginine 36, 59–62 (HLGR), arginine 119, and arginine 160. ATP contacts are provided by residues lysine 212, glutamate 330, and 357–360 (GGDS).

Belongs to the phosphoglycerate kinase family. Monomer.

Its subcellular location is the cytoplasm. It catalyses the reaction (2R)-3-phosphoglycerate + ATP = (2R)-3-phospho-glyceroyl phosphate + ADP. It participates in carbohydrate degradation; glycolysis; pyruvate from D-glyceraldehyde 3-phosphate: step 2/5. In Limosilactobacillus reuteri subsp. reuteri (strain JCM 1112) (Lactobacillus reuteri), this protein is Phosphoglycerate kinase.